The sequence spans 458 residues: Protein U54 (458 aa).

N-linked (GlcNAc...) asparagine; by host glycans are attached at residues N76, N102, N281, N321, N346, N434, and N451.

It belongs to the herpesviridae UL82 family.

This chain is Protein U54 (U54), found in Homo sapiens (Human).